The sequence spans 547 residues: Probable aquaporin-5 (547 aa).

Residues 1 to 13 (MSSSILNNRSARS) show a composition bias toward polar residues. The tract at residues 1–208 (MSSSILNNRS…DPRIPPNDRR (208 aa)) is disordered. At 1 to 269 (MSSSILNNRS…QWMNSNFKNH (269 aa)) the chain is on the cytoplasmic side. Over residues 15–32 (PAGANPAFNPPAEASSSS) the composition is skewed to low complexity. 2 stretches are compositionally biased toward basic and acidic residues: residues 152–169 (EYER…DRYT) and 198–208 (DDPRIPPNDRR). The chain crosses the membrane as a helical span at residues 270-290 (FVAGVGEFIGTTMFLFFAFAG). The Extracellular portion of the chain corresponds to 291-316 (TEVANIQADTTNRTTTGESTGSLNVS). 2 N-linked (GlcNAc...) asparagine glycosylation sites follow: asparagine 302 and asparagine 314. The chain crosses the membrane as a helical span at residues 317–337 (KLLYISIIFGFSLMVNVWVFF). Over 338–363 (RISGGLFNPAVTMAMLMVKAISVTRA) the chain is Cytoplasmic. The NPA 1 motif lies at 345–347 (NPA). A helical membrane pass occupies residues 364-384 (IVLFLAQILGSMLASVVVRYL). Residues 385-400 (FPETFNVRTTLGGGAS) are Extracellular-facing. A helical membrane pass occupies residues 401 to 421 (LVQGVFIEALLTAELVFTIFM). At 422–428 (LAKEKHR) the chain is on the cytoplasmic side. The helical transmembrane segment at 429–449 (ATFIAPVGIGLALFIAEMVGV) threads the bilayer. The Extracellular segment spans residues 450–475 (QFTGGSLNPARSFGPCVITGSFDTEH). The NPA 2 signature appears at 457–459 (NPA). A helical transmembrane segment spans residues 476 to 496 (WIYWVGPAIGSLIAVCFYWFI). Topologically, residues 497–547 (KTLEYEMANPGADGDDLNDPTKNPEKRAEIQASKPVPTAAFGSGKTASILS) are cytoplasmic. A disordered region spans residues 510–547 (GDDLNDPTKNPEKRAEIQASKPVPTAAFGSGKTASILS).

The protein belongs to the MIP/aquaporin (TC 1.A.8) family.

It localises to the membrane. It catalyses the reaction H2O(in) = H2O(out). Functionally, probable water channel that may have redundant functions with FgAQP3. This chain is Probable aquaporin-5, found in Gibberella zeae (strain ATCC MYA-4620 / CBS 123657 / FGSC 9075 / NRRL 31084 / PH-1) (Wheat head blight fungus).